Consider the following 187-residue polypeptide: dTTP/UTP pyrophosphatase (187 aa).

The active-site Proton acceptor is the Asp-68.

The protein belongs to the Maf family. YhdE subfamily. It depends on a divalent metal cation as a cofactor.

The protein resides in the cytoplasm. It carries out the reaction dTTP + H2O = dTMP + diphosphate + H(+). The catalysed reaction is UTP + H2O = UMP + diphosphate + H(+). In terms of biological role, nucleoside triphosphate pyrophosphatase that hydrolyzes dTTP and UTP. May have a dual role in cell division arrest and in preventing the incorporation of modified nucleotides into cellular nucleic acids. This is dTTP/UTP pyrophosphatase from Thermus thermophilus (strain ATCC BAA-163 / DSM 7039 / HB27).